The chain runs to 242 residues: Sugar fermentation stimulation protein homolog (242 aa).

It belongs to the SfsA family.

The sequence is that of Sugar fermentation stimulation protein homolog from Enterococcus mundtii.